The primary structure comprises 378 residues: Peptide methionine sulfoxide reductase MsrA/MsrB (378 aa).

The segment at 40 to 197 is peptide methionine sulfoxide reductase A; it reads QQATLAGGCF…KVRYNYYRYA (158 aa). The active site involves Cys48. A MsrB domain is found at 240–362; it reads DEQIRAKLTS…NSAAMRFIPK (123 aa). Cys351 (nucleophile) is an active-site residue.

It in the N-terminal section; belongs to the MsrA Met sulfoxide reductase family. The protein in the C-terminal section; belongs to the MsrB Met sulfoxide reductase family.

It catalyses the reaction L-methionyl-[protein] + [thioredoxin]-disulfide + H2O = L-methionyl-(S)-S-oxide-[protein] + [thioredoxin]-dithiol. The enzyme catalyses [thioredoxin]-disulfide + L-methionine + H2O = L-methionine (S)-S-oxide + [thioredoxin]-dithiol. The catalysed reaction is L-methionyl-[protein] + [thioredoxin]-disulfide + H2O = L-methionyl-(R)-S-oxide-[protein] + [thioredoxin]-dithiol. Has an important function as a repair enzyme for proteins that have been inactivated by oxidation. Catalyzes the reversible oxidation-reduction of methionine sulfoxide in proteins to methionine. In Vibrio cholerae serotype O1 (strain ATCC 39315 / El Tor Inaba N16961), this protein is Peptide methionine sulfoxide reductase MsrA/MsrB (msrAB).